The sequence spans 230 residues: Ribose-5-phosphate isomerase A (230 aa).

Substrate contacts are provided by residues 32–35 (TGST), 85–88 (DGAD), and 98–101 (KGGG). E107 functions as the Proton acceptor in the catalytic mechanism. K125 serves as a coordination point for substrate.

This sequence belongs to the ribose 5-phosphate isomerase family. In terms of assembly, homodimer.

It catalyses the reaction aldehydo-D-ribose 5-phosphate = D-ribulose 5-phosphate. It participates in carbohydrate degradation; pentose phosphate pathway; D-ribose 5-phosphate from D-ribulose 5-phosphate (non-oxidative stage): step 1/1. Its function is as follows. Catalyzes the reversible conversion of ribose-5-phosphate to ribulose 5-phosphate. The polypeptide is Ribose-5-phosphate isomerase A (Burkholderia ambifaria (strain MC40-6)).